Here is an 82-residue protein sequence, read N- to C-terminus: Small ribosomal subunit protein bS16 (82 aa).

The protein belongs to the bacterial ribosomal protein bS16 family.

This Mannheimia succiniciproducens (strain KCTC 0769BP / MBEL55E) protein is Small ribosomal subunit protein bS16.